We begin with the raw amino-acid sequence, 250 residues long: 3-deoxy-manno-octulosonate cytidylyltransferase (250 aa).

Belongs to the KdsB family.

It localises to the cytoplasm. The enzyme catalyses 3-deoxy-alpha-D-manno-oct-2-ulosonate + CTP = CMP-3-deoxy-beta-D-manno-octulosonate + diphosphate. The protein operates within nucleotide-sugar biosynthesis; CMP-3-deoxy-D-manno-octulosonate biosynthesis; CMP-3-deoxy-D-manno-octulosonate from 3-deoxy-D-manno-octulosonate and CTP: step 1/1. It participates in bacterial outer membrane biogenesis; lipopolysaccharide biosynthesis. Its function is as follows. Activates KDO (a required 8-carbon sugar) for incorporation into bacterial lipopolysaccharide in Gram-negative bacteria. The polypeptide is 3-deoxy-manno-octulosonate cytidylyltransferase (Francisella philomiragia subsp. philomiragia (strain ATCC 25017 / CCUG 19701 / FSC 153 / O#319-036)).